The chain runs to 194 residues: 3-isopropylmalate dehydratase small subunit (194 aa).

This sequence belongs to the LeuD family. LeuD type 1 subfamily. Heterodimer of LeuC and LeuD.

The catalysed reaction is (2R,3S)-3-isopropylmalate = (2S)-2-isopropylmalate. It functions in the pathway amino-acid biosynthesis; L-leucine biosynthesis; L-leucine from 3-methyl-2-oxobutanoate: step 2/4. In terms of biological role, catalyzes the isomerization between 2-isopropylmalate and 3-isopropylmalate, via the formation of 2-isopropylmaleate. In Brevibacillus brevis (strain 47 / JCM 6285 / NBRC 100599), this protein is 3-isopropylmalate dehydratase small subunit.